The primary structure comprises 460 residues: Argininosuccinate lyase (460 aa).

It belongs to the lyase 1 family. Argininosuccinate lyase subfamily.

The protein localises to the cytoplasm. The catalysed reaction is 2-(N(omega)-L-arginino)succinate = fumarate + L-arginine. It functions in the pathway amino-acid biosynthesis; L-arginine biosynthesis; L-arginine from L-ornithine and carbamoyl phosphate: step 3/3. The protein is Argininosuccinate lyase of Actinobacillus succinogenes (strain ATCC 55618 / DSM 22257 / CCUG 43843 / 130Z).